Consider the following 332-residue polypeptide: UPF0194 membrane protein YbhG (332 aa).

An N-terminal signal peptide occupies residues 1 to 16; that stretch reads MMKKPVVIGLAVVVLA. Residues 108–211 are a coiled coil; the sequence is EEIAQAAAAV…LQDSTLVAPS (104 aa).

This sequence belongs to the UPF0194 family.

It is found in the periplasm. The sequence is that of UPF0194 membrane protein YbhG from Escherichia coli O6:H1 (strain CFT073 / ATCC 700928 / UPEC).